The chain runs to 101 residues: Apolipoprotein C-II (101 aa).

A signal peptide spans 1–22; the sequence is MGIRYLLVLVLVLLVLGCEVQG. The interval 66 to 74 is lipid binding; the sequence is TMDEKIREI. A lipoprotein lipase cofactor region spans residues 78-101; that stretch reads STAAVSTYAGIFTDQLLSMLKGDQ.

Belongs to the apolipoprotein C2 family. Proapolipoprotein C-II is synthesized as a sialic acid containing glycoprotein which is subsequently desialylated prior to its proteolytic processing. Post-translationally, proapolipoprotein C-II, the major form found in plasma undergoes proteolytic cleavage of its N-terminal hexapeptide to generate apolipoprotein C-II, which occurs as the minor form in plasma.

It is found in the secreted. In terms of biological role, component of chylomicrons, very low-density lipoproteins (VLDL), low-density lipoproteins (LDL), and high-density lipoproteins (HDL) in plasma. Plays an important role in lipoprotein metabolism as an activator of lipoprotein lipase. Both proapolipoprotein C-II and apolipoprotein C-II can activate lipoprotein lipase. In Phoca vitulina (Harbor seal), this protein is Apolipoprotein C-II (APOC2).